A 242-amino-acid polypeptide reads, in one-letter code: MASKLELLPAVDVRDGQAVRLVHGESGTETSYGSPLEAALAWQRSGAEWLHLVDLDAAFGTGDNRALIAEVAGAMDIKVELSGGIRDDDTLAAALATGCTRVNLGTAALETPEWVAKVIAEHGDKIAVGLDVRGTTLRGRGWTRDGGDLYETLERLNSEGCARYVVTDIAKDGTLQGPNLELLRNVCAATDRPVVASGGVSSLDDLRAIAALVPLGVEGSIVGKALYAKAFTLEEALEAVAK.

The active-site Proton acceptor is Asp12. Asp131 serves as the catalytic Proton donor.

It belongs to the HisA/HisF family.

It is found in the cytoplasm. It carries out the reaction 1-(5-phospho-beta-D-ribosyl)-5-[(5-phospho-beta-D-ribosylamino)methylideneamino]imidazole-4-carboxamide = 5-[(5-phospho-1-deoxy-D-ribulos-1-ylimino)methylamino]-1-(5-phospho-beta-D-ribosyl)imidazole-4-carboxamide. The catalysed reaction is N-(5-phospho-beta-D-ribosyl)anthranilate = 1-(2-carboxyphenylamino)-1-deoxy-D-ribulose 5-phosphate. It functions in the pathway amino-acid biosynthesis; L-histidine biosynthesis; L-histidine from 5-phospho-alpha-D-ribose 1-diphosphate: step 4/9. The protein operates within amino-acid biosynthesis; L-tryptophan biosynthesis; L-tryptophan from chorismate: step 3/5. Its function is as follows. Involved in both the histidine and tryptophan biosynthetic pathways. The polypeptide is Phosphoribosyl isomerase A (Streptomyces avermitilis (strain ATCC 31267 / DSM 46492 / JCM 5070 / NBRC 14893 / NCIMB 12804 / NRRL 8165 / MA-4680)).